We begin with the raw amino-acid sequence, 249 residues long: Superoxide dismutase 1 copper chaperone (249 aa).

Residues 6–69 (TYEATYAIPM…TLRNCGKDAI (64 aa)) enclose the HMA domain. Histidine 16 lines the Zn(2+) pocket. Residues cysteine 17 and cysteine 20 each coordinate Cu cation. Cysteine 27 and cysteine 64 are disulfide-bonded. Cu cation contacts are provided by cysteine 229 and cysteine 231.

It belongs to the CCS1 family. Homodimer, and heterodimer with apo-SOD1. Zinc-binding at His-16 of CCS1 and 'Glu-43' of apo-SOD1 is required for this heterodimerization. It depends on Cu(2+) as a cofactor.

The protein resides in the cytoplasm. It localises to the mitochondrion intermembrane space. Its function is as follows. Copper chaperone for apo superoxide dismutase 1 (SOD1). Binds copper ions and delivers them specifically to apo-SOD1. This chain is Superoxide dismutase 1 copper chaperone (CCS1), found in Saccharomyces cerevisiae (strain ATCC 204508 / S288c) (Baker's yeast).